Reading from the N-terminus, the 161-residue chain is PTS system glucose-specific EIIA component (161 aa).

A PTS EIIA type-1 domain is found at 31–135 (DPVFSKKIVG…SILTPVVISN (105 aa)). Residues H68 and H83 each coordinate Zn(2+). H83 (tele-phosphohistidine intermediate; for EIIA activity) is an active-site residue. Residue H83 is modified to Phosphohistidine; by HPr.

It depends on Zn(2+) as a cofactor.

The protein resides in the cytoplasm. In terms of biological role, the phosphoenolpyruvate-dependent sugar phosphotransferase system (sugar PTS), a major carbohydrate active transport system, catalyzes the phosphorylation of incoming sugar substrates concomitantly with their translocation across the cell membrane. The enzyme II complex composed of PtsG and Crr is involved in glucose transport. This chain is PTS system glucose-specific EIIA component (crr), found in Buchnera aphidicola subsp. Acyrthosiphon pisum (strain APS) (Acyrthosiphon pisum symbiotic bacterium).